The primary structure comprises 482 residues: O-methyltransferase tpcA (482 aa).

S-adenosyl-L-methionine contacts are provided by residues 293 to 294 (GG), D316, 348 to 349 (SF), and R364. H368 serves as the catalytic Proton acceptor.

It belongs to the class I-like SAM-binding methyltransferase superfamily. Cation-independent O-methyltransferase family. In terms of tissue distribution, specifically expressed in conidia.

Its pathway is secondary metabolite biosynthesis. In terms of biological role, O-methyltransferase; part of the gene cluster that mediates the biosynthesis of trypacidin, a mycotoxin with antiprotozoal activity and that plays a role in the infection process. The pathway begins with the synthesis of atrochrysone thioester by the polyketide synthase (PKS) tpcC. The atrochrysone carboxyl ACP thioesterase tpcB then breaks the thioester bond and releases the atrochrysone carboxylic acid from tpcC. The decarboxylase tpcK converts atrochrysone carboxylic acid to atrochrysone which is further reduced into emodin anthrone. The next step is performed by the emodin anthrone oxygenase tpcL that catalyzes the oxidation of emodinanthrone to emodin. Emodin O-methyltransferase encoded by tpcA catalyzes methylation of the 8-hydroxy group of emodin to form questin. Ring cleavage of questin by questin oxidase tpcI leads to desmethylsulochrin via several intermediates including questin epoxide. Another methylation step catalyzed by tpcM leads to the formation of sulochrin which is further converted to monomethylsulfochrin by tpcH. Finally, the tpcJ catalyzes the conversion of monomethylsulfochrin to trypacidin. Trypacidin is toxic for human pulmonary and bronchial epithelial cells by initiating the intracellular formation of nitric oxide (NO) and hydrogen peroxide (H(2)O(2)), thus triggering host necrotic cell death. The trypacidin pathway is also able to produce endocrocin via a distinct route from the endocrocin Enc pathway. In Aspergillus fumigatus (strain ATCC MYA-4609 / CBS 101355 / FGSC A1100 / Af293) (Neosartorya fumigata), this protein is O-methyltransferase tpcA.